A 143-amino-acid chain; its full sequence is Large ribosomal subunit protein uL11 (143 aa).

Belongs to the universal ribosomal protein uL11 family. In terms of assembly, part of the ribosomal stalk of the 50S ribosomal subunit. Interacts with L10 and the large rRNA to form the base of the stalk. L10 forms an elongated spine to which L12 dimers bind in a sequential fashion forming a multimeric L10(L12)X complex. Post-translationally, one or more lysine residues are methylated.

In terms of biological role, forms part of the ribosomal stalk which helps the ribosome interact with GTP-bound translation factors. The chain is Large ribosomal subunit protein uL11 from Bifidobacterium longum (strain DJO10A).